A 166-amino-acid polypeptide reads, in one-letter code: Large ribosomal subunit protein uL10 (166 aa).

The protein belongs to the universal ribosomal protein uL10 family. As to quaternary structure, part of the ribosomal stalk of the 50S ribosomal subunit. The N-terminus interacts with L11 and the large rRNA to form the base of the stalk. The C-terminus forms an elongated spine to which L12 dimers bind in a sequential fashion forming a multimeric L10(L12)X complex.

In terms of biological role, forms part of the ribosomal stalk, playing a central role in the interaction of the ribosome with GTP-bound translation factors. This Streptococcus pneumoniae (strain ATCC 700669 / Spain 23F-1) protein is Large ribosomal subunit protein uL10.